The sequence spans 221 residues: MNNSQQWQAANTARAALYRWFAELFARELTKTNLTQLQAQYPSLHAAFSDLNLEPQSAALQTALENLQVIPAPDRALELAADFAHLFLLSGHQSAPPYASYYLESDQMLYGKPAQQMSEFLASHKLDLHPEFREPKDHLSIYLQVMSLWIKSSVDEQANLIEMAVQQQHFLEDALLSWLPKFAARCQHIRVKTQVYPAIIDLLLHFVQEDRQALEDMAEAE.

The protein belongs to the TorD/DmsD family. TorD subfamily.

The protein resides in the cytoplasm. Functionally, involved in the biogenesis of TorA. Acts on TorA before the insertion of the molybdenum cofactor and, as a result, probably favors a conformation of the apoenzyme that is competent for acquiring the cofactor. This Psychrobacter sp. (strain PRwf-1) protein is Chaperone protein TorD.